The primary structure comprises 164 residues: MIKAVYPGSFDPVTNGHIDIIQRGAKIYDEIIVLVAENISKKPLFSLEERLDMLEHSLKDIPNVRIDHFSGLLVDYLRKINVKIIIRGLRAVSDFEYEFQQALTNKKLYPDCETVFLVSDLKYTFLSSSVVKEIASFGGCIKGLVPDYVAEKLYEKFGVKPKGV.

A substrate-binding site is contributed by S9. ATP contacts are provided by residues 9–10 (SF) and H17. Substrate is bound by residues K41, L73, and R87. ATP is bound by residues 88–90 (GLR), E98, and 123–129 (YTFLSSS).

The protein belongs to the bacterial CoaD family. Homohexamer. The cofactor is Mg(2+).

The protein resides in the cytoplasm. The enzyme catalyses (R)-4'-phosphopantetheine + ATP + H(+) = 3'-dephospho-CoA + diphosphate. The protein operates within cofactor biosynthesis; coenzyme A biosynthesis; CoA from (R)-pantothenate: step 4/5. Its function is as follows. Reversibly transfers an adenylyl group from ATP to 4'-phosphopantetheine, yielding dephospho-CoA (dPCoA) and pyrophosphate. The protein is Phosphopantetheine adenylyltransferase of Dictyoglomus thermophilum (strain ATCC 35947 / DSM 3960 / H-6-12).